A 289-amino-acid polypeptide reads, in one-letter code: Diaminopimelate epimerase (289 aa).

Substrate contacts are provided by asparagine 17, glutamine 47, and asparagine 67. Cysteine 76 (proton donor) is an active-site residue. Substrate-binding positions include 77–78, asparagine 164, asparagine 198, and 216–217; these read GN and ER. Cysteine 225 acts as the Proton acceptor in catalysis. 226–227 is a substrate binding site; it reads GS.

Belongs to the diaminopimelate epimerase family. Homodimer.

Its subcellular location is the cytoplasm. The catalysed reaction is (2S,6S)-2,6-diaminopimelate = meso-2,6-diaminopimelate. The protein operates within amino-acid biosynthesis; L-lysine biosynthesis via DAP pathway; DL-2,6-diaminopimelate from LL-2,6-diaminopimelate: step 1/1. In terms of biological role, catalyzes the stereoinversion of LL-2,6-diaminopimelate (L,L-DAP) to meso-diaminopimelate (meso-DAP), a precursor of L-lysine and an essential component of the bacterial peptidoglycan. The chain is Diaminopimelate epimerase from Bradyrhizobium sp. (strain ORS 278).